A 415-amino-acid chain; its full sequence is Serine hydroxymethyltransferase (415 aa).

(6S)-5,6,7,8-tetrahydrofolate contacts are provided by residues Leu-117 and 121–123; that span reads GHL. An N6-(pyridoxal phosphate)lysine modification is found at Lys-226. Residues Glu-241 and 349–351 contribute to the (6S)-5,6,7,8-tetrahydrofolate site; that span reads SPF.

Belongs to the SHMT family. Homodimer. It depends on pyridoxal 5'-phosphate as a cofactor.

Its subcellular location is the cytoplasm. It catalyses the reaction (6R)-5,10-methylene-5,6,7,8-tetrahydrofolate + glycine + H2O = (6S)-5,6,7,8-tetrahydrofolate + L-serine. It participates in one-carbon metabolism; tetrahydrofolate interconversion. It functions in the pathway amino-acid biosynthesis; glycine biosynthesis; glycine from L-serine: step 1/1. Its function is as follows. Catalyzes the reversible interconversion of serine and glycine with tetrahydrofolate (THF) serving as the one-carbon carrier. This reaction serves as the major source of one-carbon groups required for the biosynthesis of purines, thymidylate, methionine, and other important biomolecules. Also exhibits THF-independent aldolase activity toward beta-hydroxyamino acids, producing glycine and aldehydes, via a retro-aldol mechanism. In Trichlorobacter lovleyi (strain ATCC BAA-1151 / DSM 17278 / SZ) (Geobacter lovleyi), this protein is Serine hydroxymethyltransferase.